The chain runs to 326 residues: dTDP-4-dehydro-6-deoxy-D-allose reductase (326 aa).

Residues 15–21 and 129–132 each bind NAD(+); these read GALGFIG and MSSS. Catalysis depends on Tyr160, which acts as the Proton donor/acceptor. Residues Lys164 and 187-190 contribute to the NAD(+) site; that span reads PGNV.

The protein belongs to the NAD(P)-dependent epimerase/dehydratase family.

It carries out the reaction dTDP-6-deoxy-alpha-D-allose + NAD(+) = dTDP-4-dehydro-6-deoxy-alpha-D-allose + NADH + H(+). It catalyses the reaction dTDP-6-deoxy-alpha-D-allose + NADP(+) = dTDP-4-dehydro-6-deoxy-alpha-D-allose + NADPH + H(+). In terms of biological role, catalyzes the stereospecific reduction of the C-4 keto group of dTDP-4-dehydro-6-deoxy-D-allose, leading to dTDP-6-deoxy-D-allose, an intermediate in the biosynthesis of the mycinose moiety of dihydrochalcomycin (GERI-155) antibiotic. Cannot directly reduce dTDP-4-dehydro-6-deoxyglucose, and thus acts after the epimerization step catalyzed by GerF. The chain is dTDP-4-dehydro-6-deoxy-D-allose reductase (gerKI) from Streptomyces sp.